Reading from the N-terminus, the 135-residue chain is Transcriptional activator protein (135 aa).

The Nuclear localization signal motif lies at 17–32 (KIQHHIAKKRQVRRRR). A zinc finger spans residues 37-54 (CGCSYYIHLDCINHGFTH). The interval 120–135 (HLDDLTVSDWSFFKSL) is transactivation.

Belongs to the geminiviridae transcriptional activator protein family. In terms of assembly, monomer. Homodimer. Homooligomer. Self-interaction correlates with nuclear localization and efficient activation of transcription. Monomers suppress local silencing by interacting with and inactivating host adenosine kinase 2 (ADK2) in the cytoplasm. Interacts with and inhibits host SNF1 kinase. Binds to ssDNA. Phosphorylated.

It localises to the host nucleus. The protein localises to the host cytoplasm. Its function is as follows. Strong activator of the late viral genes promoters. Acts as a suppressor of RNA-mediated gene silencing, also known as post-transcriptional gene silencing (PTGS), a mechanism of plant viral defense that limits the accumulation of viral RNAs. TrAP suppresses the host RNA silencing by inhibiting adenosine kinase 2 (ADK2), a kinase involved in a general methylation pathway. Also suppresses the host basal defense by interacting with and inhibiting SNF1 kinase, a key regulator of cell metabolism implicated in innate antiviral defense. Determines pathogenicity. This chain is Transcriptional activator protein, found in Tomato yellow leaf curl Sardinia virus (isolate Spain-2) (TYLCSV).